The chain runs to 148 residues: Glutamyl-tRNA(Gln) amidotransferase subunit C, mitochondrial (148 aa).

This sequence belongs to the GatC family. In terms of assembly, subunit of the heterotrimeric GatCAB amidotransferase (AdT) complex, composed of A, B and C subunits.

The protein resides in the mitochondrion. The enzyme catalyses L-glutamyl-tRNA(Gln) + L-glutamine + ATP + H2O = L-glutaminyl-tRNA(Gln) + L-glutamate + ADP + phosphate + H(+). Functionally, allows the formation of correctly charged Gln-tRNA(Gln) through the transamidation of misacylated Glu-tRNA(Gln) in the mitochondria. The reaction takes place in the presence of glutamine and ATP through an activated gamma-phospho-Glu-tRNA(Gln). This chain is Glutamyl-tRNA(Gln) amidotransferase subunit C, mitochondrial, found in Drosophila pseudoobscura pseudoobscura (Fruit fly).